The sequence spans 370 residues: MEGLKVTPLRGVYEEYGGKIVDFAGYELPTQFKGFLHEHHTVREKAGLFDVSHMGEATVKGKDAQKFVQYLMTNDINVLKDNEVLYTFMCNEDGGVIDDLLVYKFAEDEFFLVINASNKDKDVKWILDHKGDFDVEIVDVSDSIAQLAFQGPLAEEILQKIVDVDLQEIKFFKLKRDVLVNGKKCLVSRTGYTGEDGFEIYCKPEDAKGLWHAILNAGKEEGAQPIGLGARDTLRFEASLLLYGNEMDETITPLEVGMGFFVKLKVEEDFIGKDALIKQKAEGVTRKLVGFELLDKGIPRHGYEVIKDGKVIGHVTTGYKSPTLNKAIGLALVEEQYSKIGTEFNIKVRKKELKAVAIDKRFYTKKTKTK.

Belongs to the GcvT family. The glycine cleavage system is composed of four proteins: P, T, L and H.

It carries out the reaction N(6)-[(R)-S(8)-aminomethyldihydrolipoyl]-L-lysyl-[protein] + (6S)-5,6,7,8-tetrahydrofolate = N(6)-[(R)-dihydrolipoyl]-L-lysyl-[protein] + (6R)-5,10-methylene-5,6,7,8-tetrahydrofolate + NH4(+). The glycine cleavage system catalyzes the degradation of glycine. This Clostridium botulinum (strain 657 / Type Ba4) protein is Aminomethyltransferase.